A 469-amino-acid chain; its full sequence is Acetyl-CoA decarbonylase/synthase complex subunit beta 1 (469 aa).

Residues cysteine 189, cysteine 192, cysteine 278, and cysteine 280 each coordinate [Ni-Fe-S] cluster.

Belongs to the CdhC family. As to quaternary structure, monomer. The ACDS complex is made up of alpha, epsilon, beta, gamma and delta chains with a probable stoichiometry of (alpha(2)epsilon(2))(4)-beta(8)-(gamma(1)delta(1))(8) (Potential). The cofactor is [Ni-Fe-S] cluster.

It catalyses the reaction Co(I)-[corrinoid Fe-S protein] + acetyl-CoA + H(+) = methyl-Co(III)-[corrinoid Fe-S protein] + CO + CoA. The protein operates within one-carbon metabolism; methanogenesis from acetate. Its function is as follows. Part of a complex that catalyzes the reversible cleavage of acetyl-CoA, allowing growth on acetate as sole source of carbon and energy. The alpha-epsilon complex generates CO from CO(2), while the beta subunit (this protein) combines the CO with CoA and a methyl group to form acetyl-CoA. The methyl group, which is incorporated into acetyl-CoA, is transferred to the beta subunit by a corrinoid iron-sulfur protein (the gamma-delta complex). The chain is Acetyl-CoA decarbonylase/synthase complex subunit beta 1 (cdhC1) from Methanosarcina mazei (strain ATCC BAA-159 / DSM 3647 / Goe1 / Go1 / JCM 11833 / OCM 88) (Methanosarcina frisia).